The following is a 70-amino-acid chain: ATP synthase subunit c (70 aa).

2 helical membrane passes run 4–24 (IAAAIAIGLGALGAGIGNGLI) and 45–65 (LMFIGVALVEALPIIAVVIAF).

This sequence belongs to the ATPase C chain family. F-type ATPases have 2 components, F(1) - the catalytic core - and F(0) - the membrane proton channel. F(1) has five subunits: alpha(3), beta(3), gamma(1), delta(1), epsilon(1). F(0) has three main subunits: a(1), b(2) and c(10-14). The alpha and beta chains form an alternating ring which encloses part of the gamma chain. F(1) is attached to F(0) by a central stalk formed by the gamma and epsilon chains, while a peripheral stalk is formed by the delta and b chains.

Its subcellular location is the cell membrane. Functionally, f(1)F(0) ATP synthase produces ATP from ADP in the presence of a proton or sodium gradient. F-type ATPases consist of two structural domains, F(1) containing the extramembraneous catalytic core and F(0) containing the membrane proton channel, linked together by a central stalk and a peripheral stalk. During catalysis, ATP synthesis in the catalytic domain of F(1) is coupled via a rotary mechanism of the central stalk subunits to proton translocation. Key component of the F(0) channel; it plays a direct role in translocation across the membrane. A homomeric c-ring of between 10-14 subunits forms the central stalk rotor element with the F(1) delta and epsilon subunits. This chain is ATP synthase subunit c, found in Bacillus licheniformis (strain ATCC 14580 / DSM 13 / JCM 2505 / CCUG 7422 / NBRC 12200 / NCIMB 9375 / NCTC 10341 / NRRL NRS-1264 / Gibson 46).